The sequence spans 512 residues: Cytochrome P450 monooxygenase astD (512 aa).

Residues 19 to 39 (MGISILVMLSTFLALGTIFVY) traverse the membrane as a helical segment. N-linked (GlcNAc...) asparagine glycosylation is found at N191 and N413. C449 lines the heme pocket.

This sequence belongs to the cytochrome P450 family. Heme is required as a cofactor.

Its subcellular location is the membrane. The protein operates within secondary metabolite biosynthesis; terpenoid biosynthesis. Its function is as follows. Cytochrome P450 monooxygenase; part of the gene cluster that mediates the biosynthesis of astellolides, drimane-type sesquiterpene esters that show antimicrobial, anti-inflammatory, and anti-tumor activities. The first step in astellolide biosynthesis is performed by the sesquiterpene cyclase astC that catalyzes the formation of drimanyl pyrophosphate from farnesyl pyrophosphate. Drimanyl pyrophosphate is then dephosphorylated by the sesquiterpene phosphatase astI to produce drimanyl monophosphate which is further dephosphorylated to drim-8-ene-11-ol by atsK. Drim-8-ene-11-ol is converted to confertifolin, probably by the cytochrome P450 monooxygenase astD and/or the dehydrogenase astE. The cytochrome P450 monooxygenases astB, astF and astJ then hydroxylate confertifolin at C6, C14, or C15 to form trihydroxy confertifolin. The nonribosomal peptide synthetase astA catalyzes ester bond formation between trihydroxy contifolin and benzoic acid (BA) or 4-hydroxy benzoic acid (4HBA), leading to the formation of dideacetyl astellolides A and B, respectively. Finally, the O-acetyltransferase astG converts dideacetyl astellolides A and B into deacetyl astellolides A and B. This is Cytochrome P450 monooxygenase astD from Aspergillus oryzae (strain ATCC 42149 / RIB 40) (Yellow koji mold).